We begin with the raw amino-acid sequence, 275 residues long: Formamidopyrimidine-DNA glycosylase (275 aa).

Residue Pro-2 is the Schiff-base intermediate with DNA of the active site. Glu-3 acts as the Proton donor in catalysis. The Proton donor; for beta-elimination activity role is filled by Lys-58. The DNA site is built by His-91, Arg-109, and Arg-154. An FPG-type zinc finger spans residues 240–274 (AVYERAGLPCRVCGAPIRRLVQGQRATYFCPSCQK). Arg-264 (proton donor; for delta-elimination activity) is an active-site residue.

The protein belongs to the FPG family. Monomer. Zn(2+) is required as a cofactor.

It carries out the reaction Hydrolysis of DNA containing ring-opened 7-methylguanine residues, releasing 2,6-diamino-4-hydroxy-5-(N-methyl)formamidopyrimidine.. The catalysed reaction is 2'-deoxyribonucleotide-(2'-deoxyribose 5'-phosphate)-2'-deoxyribonucleotide-DNA = a 3'-end 2'-deoxyribonucleotide-(2,3-dehydro-2,3-deoxyribose 5'-phosphate)-DNA + a 5'-end 5'-phospho-2'-deoxyribonucleoside-DNA + H(+). In terms of biological role, involved in base excision repair of DNA damaged by oxidation or by mutagenic agents. Acts as a DNA glycosylase that recognizes and removes damaged bases. Has a preference for oxidized purines, such as 7,8-dihydro-8-oxoguanine (8-oxoG). Has AP (apurinic/apyrimidinic) lyase activity and introduces nicks in the DNA strand. Cleaves the DNA backbone by beta-delta elimination to generate a single-strand break at the site of the removed base with both 3'- and 5'-phosphates. The protein is Formamidopyrimidine-DNA glycosylase of Bordetella parapertussis (strain 12822 / ATCC BAA-587 / NCTC 13253).